The primary structure comprises 353 residues: Ubiquinol oxidase 2, mitochondrial (353 aa).

A mitochondrion-targeting transit peptide spans 1-21 (MSQLITKAALRVLLVCGRGNC). Residues 178–198 (AMMLETVAAVPGMVGGMLLHL) form a helical membrane-spanning segment. Fe cation is bound by residues glutamate 182, glutamate 221, and histidine 224. Residues 240–260 (LLVMLVQGIFFNSFFVCYVIS) form a helical membrane-spanning segment. Positions 272, 323, and 326 each coordinate Fe cation.

It belongs to the alternative oxidase family. In terms of assembly, homodimer; disulfide-linked. The cofactor is Fe cation. Maximally expressed in dry seeds. Detected in roots, stems and leaves.

The protein resides in the mitochondrion inner membrane. The enzyme catalyses 2 a ubiquinol + O2 = 2 a ubiquinone + 2 H2O. Functionally, catalyzes the cyanide-resistant oxidation of ubiquinol and the reduction of molecular oxygen to water, but does not translocate protons and consequently is not linked to oxidative phosphorylation. May increase respiration when the cytochrome respiratory pathway is restricted, or in response to low temperatures. The chain is Ubiquinol oxidase 2, mitochondrial (AOX2) from Arabidopsis thaliana (Mouse-ear cress).